The sequence spans 434 residues: RHOMBOID-like protein 9, chloroplastic (434 aa).

Residues 1 to 68 constitute a chloroplast transit peptide; sequence MALFPLHHEV…SPRRRLCLVR (68 aa). 8 helical membrane passes run 182–202, 209–229, 238–258, 267–287, 289–309, 326–346, 352–372, and 399–419; these read FYAVSILASINVGVCLFEAAA, MGLLSLPLLYGAKINDLILAG, MFLHSGIPHVALSSWALLTFG, LFTFCLIYILGGVSGNFMSFL, TADPTVGGTGPAFALIGAWLV, LFQKAIIMTGFGLILSHFGPI, LGALIAGIVYGFFTCPVLQLG, and FLLFTIFVAVIVTSLLLIGDG.

This sequence belongs to the peptidase S54 family.

The protein resides in the plastid. It is found in the chloroplast membrane. Functionally, probable rhomboid-type serine protease that catalyzes intramembrane proteolysis. The polypeptide is RHOMBOID-like protein 9, chloroplastic (Arabidopsis thaliana (Mouse-ear cress)).